Reading from the N-terminus, the 723-residue chain is Solute carrier organic anion transporter family member 4A1 (723 aa).

Residues 1–102 (MPQHAMGDTH…KCLQVFNTPK (102 aa)) lie on the Cytoplasmic side of the membrane. Residues 23–64 (SSATDSGCDTPPSSRASPASLRSAHGTLGSSSQPLFEPQAEK) are disordered. Positions 33-46 (PPSSRASPASLRSA) are enriched in low complexity. Phosphoserine occurs at positions 39, 42, and 45. The helical transmembrane segment at 103 to 123 (GFLFFLCAASFLQGMTVNGFI) threads the bilayer. Topologically, residues 124–142 (NTVITSIERRFDLHSYQSG) are extracellular. The helical transmembrane segment at 143–163 (LIASSYDIAACLCLTFVSYFG) threads the bilayer. Over 164–169 (GNGHKP) the chain is Cytoplasmic. The helical transmembrane segment at 170 to 194 (RWLGWGVLVLGIGSLVFALPHFTAG) threads the bilayer. At 195-224 (RYEVEMDEGLGTGTCLTNQSHVECKDSASG) the chain is on the extracellular side. A glycan (N-linked (GlcNAc...) asparagine) is linked at Asn212. Residues 225 to 255 (LSNYRLIFMLGQLLHGVGATPLYTLGVTYLD) traverse the membrane as a helical segment. Residues 256–274 (ENVKSSYSPIYIAIFYTAA) lie on the Cytoplasmic side of the membrane. A helical transmembrane segment spans residues 275–295 (ILGPAAGYLIGGAMLNVYTEV). Residues 296–309 (GQRTELTTDSPLWV) are Extracellular-facing. The helical transmembrane segment at 310–334 (GAWWIGFLGTGIAAFLIAIPILGYP) threads the bilayer. The Cytoplasmic segment spans residues 335–380 (RQLPGSQRYVVMRAAETQQLKDHSRGAVSNPAFGKTVRDLPLSIWL). A helical transmembrane segment spans residues 381 to 402 (LLRNPTFILLCLAGATEATLIA). Residues 403–422 (GMSTFGPKFFEAQFSLSASE) are Extracellular-facing. Residues 423-446 (AATLFGYLVVPAGGGGTLLGGFLV) form a helical membrane-spanning segment. At 447 to 450 (NKFK) the chain is on the cytoplasmic side. The helical transmembrane segment at 451-473 (LRGSGIIRFCLFCTLTSLLAFFV) threads the bilayer. The Extracellular portion of the chain corresponds to 474–582 (FLMHCPNVHM…ASTCQSKPFL (109 aa)). The region spanning 500–557 (LDLKAACNAIYCCQPKHYSPLCGSDGTMYYSPCYAGCPADAETDLGGQKVYRGCSCIL) is the Kazal-like domain. 2 disulfides stabilise this stretch: Cys506-Cys536 and Cys521-Cys555. Asn566 carries N-linked (GlcNAc...) asparagine glycosylation. The chain crosses the membrane as a helical span at residues 583 to 605 (LVLVFVVIIFTFLSSIPALTATL). The Cytoplasmic portion of the chain corresponds to 606-614 (RCVSDRQRS). A helical transmembrane segment spans residues 615–640 (FALGIQWIVVRTLGSIPGPIAFGWVI). The Extracellular portion of the chain corresponds to 641-673 (DKACLLWQDQCGHQGSCFVYENEAMSRYMLIAG). Residues 674–691 (LTFKVLGFLFFVAAYFLY) traverse the membrane as a helical segment. At 692–723 (KSPSVSSDGLEASLPSQSSASDSPTEQLQSNV) the chain is on the cytoplasmic side. Residues 700 to 723 (GLEASLPSQSSASDSPTEQLQSNV) form a disordered region. Residues 701–723 (LEASLPSQSSASDSPTEQLQSNV) are compositionally biased toward low complexity.

This sequence belongs to the organo anion transporter (TC 2.A.60) family.

It localises to the cell membrane. The enzyme catalyses 3,3',5-triiodo-L-thyronine(out) + L-glutamate(in) = 3,3',5-triiodo-L-thyronine(in) + L-glutamate(out). The catalysed reaction is L-thyroxine(out) + L-glutamate(in) = L-thyroxine(in) + L-glutamate(out). It carries out the reaction estrone 3-sulfate(out) + L-glutamate(in) = estrone 3-sulfate(in) + L-glutamate(out). It catalyses the reaction taurocholate(out) + L-glutamate(in) = taurocholate(in) + L-glutamate(out). The enzyme catalyses 3,3',5-triiodo-L-thyronine(out) = 3,3',5-triiodo-L-thyronine(in). The catalysed reaction is L-thyroxine(out) = L-thyroxine(in). It carries out the reaction 3,3',5'-triiodo-L-thyronine(out) = 3,3',5'-triiodo-L-thyronine(in). It catalyses the reaction estrone 3-sulfate(out) = estrone 3-sulfate(in). The enzyme catalyses 17beta-estradiol 17-O-(beta-D-glucuronate)(out) = 17beta-estradiol 17-O-(beta-D-glucuronate)(in). The catalysed reaction is taurocholate(out) = taurocholate(in). It carries out the reaction prostaglandin E2(out) = prostaglandin E2(in). Functionally, organic anion antiporter with apparent broad substrate specificity. Recognizes various substrates including thyroid hormones 3,3',5-triiodo-L-thyronine (T3), L-thyroxine (T4) and 3,3',5'-triiodo-L-thyronine (rT3), conjugated steroids such as estrone 3-sulfate and estradiol 17-beta glucuronide, bile acids such as taurocholate and prostanoids such as prostaglandin E2, likely operating in a tissue-specific manner. May be involved in uptake of metabolites from the circulation into organs such as kidney, liver or placenta. Possibly drives the selective transport of thyroid hormones and estrogens coupled to an outward glutamate gradient across the microvillous membrane of the placenta. The transport mechanism, its electrogenicity and potential tissue-specific counterions remain to be elucidated. This Mus musculus (Mouse) protein is Solute carrier organic anion transporter family member 4A1 (Slco4a1).